A 553-amino-acid polypeptide reads, in one-letter code: Phospholipase B-like 1 (553 aa).

A signal peptide spans 1–38; that stretch reads MTRGGPGGRPGLPQPPPLLLLLLLLPLLLVTAEPPKPA. The N-linked (GlcNAc...) (high mannose) asparagine; alternate glycan is linked to asparagine 71. Asparagine 71 carries an N-linked (GlcNAc...) (hybrid) asparagine; alternate glycan. Positions 209–227 are cleaved as a propeptide — removed in mature form; the sequence is LSPTKNGSLKVFKRWDMGH. Asparagine 308 and asparagine 366 each carry an N-linked (GlcNAc...) (high mannose) asparagine; alternate glycan. N-linked (GlcNAc...) (hybrid) asparagine; alternate glycans are attached at residues asparagine 308 and asparagine 366. A glycan (N-linked (GlcNAc...) asparagine) is linked at asparagine 411. Cystine bridges form between cysteine 470/cysteine 475 and cysteine 474/cysteine 489. An N-linked (GlcNAc...) (high mannose) asparagine; alternate glycan is attached at asparagine 526. Asparagine 526 carries an N-linked (GlcNAc...) (hybrid) asparagine; alternate glycan.

It belongs to the phospholipase B-like family. As to quaternary structure, may form a homodimer, each monomer is composed of a chain A and a chain B. The maturation cleavages that produces chains A and B are required to open the putative substrate binding pocket. Both chains A and B remain associated in the mature protein. In terms of tissue distribution, expressed in neutrophils and monocytes.

The protein localises to the lysosome. In terms of biological role, in view of the small size of the putative binding pocket, it has been proposed that it may act as an amidase or a peptidase. Exhibits a weak phospholipase activity, acting on various phospholipids, including phosphatidylcholine, phosphatidylinositol, phosphatidylethanolamine and lysophospholipids. The sequence is that of Phospholipase B-like 1 (PLBD1) from Homo sapiens (Human).